The primary structure comprises 210 residues: Probable septum site-determining protein MinC (210 aa).

It belongs to the MinC family. Interacts with MinD and FtsZ.

Its function is as follows. Cell division inhibitor that blocks the formation of polar Z ring septums. Rapidly oscillates between the poles of the cell to destabilize FtsZ filaments that have formed before they mature into polar Z rings. Prevents FtsZ polymerization. This chain is Probable septum site-determining protein MinC, found in Thermotoga neapolitana (strain ATCC 49049 / DSM 4359 / NBRC 107923 / NS-E).